We begin with the raw amino-acid sequence, 98 residues long: DNA-binding protein Fis (98 aa).

The H-T-H motif DNA-binding region spans 74 to 93; sequence QTRAAVMMGINRGTLRKKLK.

The protein belongs to the transcriptional regulatory Fis family. Homodimer.

Its function is as follows. Activates ribosomal RNA transcription. Plays a direct role in upstream activation of rRNA promoters. In Aeromonas hydrophila subsp. hydrophila (strain ATCC 7966 / DSM 30187 / BCRC 13018 / CCUG 14551 / JCM 1027 / KCTC 2358 / NCIMB 9240 / NCTC 8049), this protein is DNA-binding protein Fis.